The chain runs to 472 residues: GTPase Der (472 aa).

2 EngA-type G domains span residues 3–166 (AVIA…PPAE) and 178–351 (IPVA…AAAH). GTP-binding positions include 9-16 (GRPNVGKS), 56-60 (DTGGM), 118-121 (NKTD), 184-191 (GRPNVGKS), 231-235 (DTAGV), and 296-299 (NKWD). A KH-like domain is found at 352–436 (RDLATPELND…PVRIECRASD (85 aa)). Positions 434–472 (ASDNPFADKPNQLTERQRRRRQRVIHHAKKREKKRKRRR) are disordered. Positions 450-472 (QRRRRQRVIHHAKKREKKRKRRR) are enriched in basic residues.

The protein belongs to the TRAFAC class TrmE-Era-EngA-EngB-Septin-like GTPase superfamily. EngA (Der) GTPase family. In terms of assembly, associates with the 50S ribosomal subunit.

Functionally, GTPase that plays an essential role in the late steps of ribosome biogenesis. The sequence is that of GTPase Der from Halorhodospira halophila (strain DSM 244 / SL1) (Ectothiorhodospira halophila (strain DSM 244 / SL1)).